An 88-amino-acid polypeptide reads, in one-letter code: UPF0250 protein Sfri_0694 (88 aa).

The protein belongs to the UPF0250 family.

This is UPF0250 protein Sfri_0694 from Shewanella frigidimarina (strain NCIMB 400).